A 529-amino-acid chain; its full sequence is Peptide chain release factor 3 (529 aa).

Residues 11–280 (SKRRTFAIIS…GLTDWAPAPL (270 aa)) form the tr-type G domain. GTP contacts are provided by residues 20–27 (SHPDAGKT), 88–92 (DTPGH), and 142–145 (NKLD).

It belongs to the TRAFAC class translation factor GTPase superfamily. Classic translation factor GTPase family. PrfC subfamily.

It localises to the cytoplasm. Its function is as follows. Increases the formation of ribosomal termination complexes and stimulates activities of RF-1 and RF-2. It binds guanine nucleotides and has strong preference for UGA stop codons. It may interact directly with the ribosome. The stimulation of RF-1 and RF-2 is significantly reduced by GTP and GDP, but not by GMP. This Vibrio vulnificus (strain CMCP6) protein is Peptide chain release factor 3.